We begin with the raw amino-acid sequence, 135 residues long: MSHKRFNPLTASSSDEDELETPIREVEDSSSDEETDSDSDSELGKKDEVVTEVSALNNQESKSVKISEKSVAKRSRETHEAQASADVKKAKKVKKRGGGGGEEAETKKAYFQRVWTDDDEIVVLEGFIDYKNDSG.

The disordered stretch occupies residues 1–104 (MSHKRFNPLT…KRGGGGGEEA (104 aa)). Acidic residues predominate over residues 28-41 (DSSSDEETDSDSDS). Positions 62-80 (KSVKISEKSVAKRSRETHE) are enriched in basic and acidic residues.

This sequence belongs to the GeBP family.

The protein is Probable transcription factor At2g20613 of Arabidopsis thaliana (Mouse-ear cress).